The sequence spans 274 residues: Bis(5'-nucleosyl)-tetraphosphatase, symmetrical (274 aa).

This sequence belongs to the Ap4A hydrolase family.

The enzyme catalyses P(1),P(4)-bis(5'-adenosyl) tetraphosphate + H2O = 2 ADP + 2 H(+). In terms of biological role, hydrolyzes diadenosine 5',5'''-P1,P4-tetraphosphate to yield ADP. The sequence is that of Bis(5'-nucleosyl)-tetraphosphatase, symmetrical from Shewanella putrefaciens (strain CN-32 / ATCC BAA-453).